Consider the following 508-residue polypeptide: UDP-N-acetylmuramoyl-L-alanyl-D-glutamate--2,6-diaminopimelate ligase (508 aa).

Residue serine 29 coordinates UDP-N-acetyl-alpha-D-muramoyl-L-alanyl-D-glutamate. 112–118 (GTNGKTS) is an ATP binding site. UDP-N-acetyl-alpha-D-muramoyl-L-alanyl-D-glutamate-binding positions include 159–160 (TT), serine 186, glutamine 192, and arginine 194. Lysine 226 carries the post-translational modification N6-carboxylysine. Residues arginine 398, 421 to 424 (DNPR), glycine 473, and glutamate 477 contribute to the meso-2,6-diaminopimelate site. The Meso-diaminopimelate recognition motif motif lies at 421 to 424 (DNPR).

The protein belongs to the MurCDEF family. MurE subfamily. It depends on Mg(2+) as a cofactor. In terms of processing, carboxylation is probably crucial for Mg(2+) binding and, consequently, for the gamma-phosphate positioning of ATP.

Its subcellular location is the cytoplasm. It carries out the reaction UDP-N-acetyl-alpha-D-muramoyl-L-alanyl-D-glutamate + meso-2,6-diaminopimelate + ATP = UDP-N-acetyl-alpha-D-muramoyl-L-alanyl-gamma-D-glutamyl-meso-2,6-diaminopimelate + ADP + phosphate + H(+). It participates in cell wall biogenesis; peptidoglycan biosynthesis. Its function is as follows. Catalyzes the addition of meso-diaminopimelic acid to the nucleotide precursor UDP-N-acetylmuramoyl-L-alanyl-D-glutamate (UMAG) in the biosynthesis of bacterial cell-wall peptidoglycan. The chain is UDP-N-acetylmuramoyl-L-alanyl-D-glutamate--2,6-diaminopimelate ligase from Janthinobacterium sp. (strain Marseille) (Minibacterium massiliensis).